A 425-amino-acid polypeptide reads, in one-letter code: Zinc finger protein 789 (425 aa).

Positions 11–82 constitute a KRAB domain; sequence LSFEDVAMYF…DLPRTGNRKA (72 aa). C2H2-type zinc fingers lie at residues 201-223, 229-251, 257-279, 285-307, 313-335, 341-363, 369-391, and 397-419; these read YECSECGKVIRRKAWFDQHQRIH, FECKVCGQAFRQRSALTVHKQCH, YRCHDCGKCFRQLAYLVEHKRIH, YKCSKCEKTFSQNSTLIRHQVIH, HKCLECGKAFGRHSTLLCHQQIH, HKCSECGQSFGRNVDLIQHQRIH, FQCGECGKTFSFKRNLFRHQVIH, and YQCVICGKSFKWHTSFIKHQGTH.

This sequence belongs to the krueppel C2H2-type zinc-finger protein family.

The protein resides in the nucleus. In terms of biological role, may be involved in transcriptional regulation. This Homo sapiens (Human) protein is Zinc finger protein 789 (ZNF789).